Consider the following 81-residue polypeptide: MNPIISAASVIAAGLAVGLASIGPGVGQGTAAGQAVEGIARQPEAEGKIRGTLLLSLAFMEALTIYGLVVALALLFANPFV.

A run of 2 helical transmembrane segments spans residues 3–23 (PIISAASVIAAGLAVGLASIG) and 57–77 (LAFMEALTIYGLVVALALLFA).

It belongs to the ATPase C chain family. F-type ATPases have 2 components, F(1) - the catalytic core - and F(0) - the membrane proton channel. F(1) has five subunits: alpha(3), beta(3), gamma(1), delta(1), epsilon(1). F(0) has four main subunits: a(1), b(1), b'(1) and c(10-14). The alpha and beta chains form an alternating ring which encloses part of the gamma chain. F(1) is attached to F(0) by a central stalk formed by the gamma and epsilon chains, while a peripheral stalk is formed by the delta, b and b' chains.

The protein resides in the plastid. It is found in the chloroplast thylakoid membrane. F(1)F(0) ATP synthase produces ATP from ADP in the presence of a proton or sodium gradient. F-type ATPases consist of two structural domains, F(1) containing the extramembraneous catalytic core and F(0) containing the membrane proton channel, linked together by a central stalk and a peripheral stalk. During catalysis, ATP synthesis in the catalytic domain of F(1) is coupled via a rotary mechanism of the central stalk subunits to proton translocation. Functionally, key component of the F(0) channel; it plays a direct role in translocation across the membrane. A homomeric c-ring of between 10-14 subunits forms the central stalk rotor element with the F(1) delta and epsilon subunits. The polypeptide is ATP synthase subunit c, chloroplastic (Phaseolus vulgaris (Kidney bean)).